The sequence spans 102 residues: NADH-quinone oxidoreductase subunit K (102 aa).

A run of 3 helical transmembrane segments spans residues 6–26 (LEHG…GLMV), 30–50 (ILFV…AFVV), and 62–82 (VMFI…LAIL).

It belongs to the complex I subunit 4L family. As to quaternary structure, NDH-1 is composed of 13 different subunits. Subunits NuoA, H, J, K, L, M, N constitute the membrane sector of the complex.

The protein resides in the cell inner membrane. The enzyme catalyses a quinone + NADH + 5 H(+)(in) = a quinol + NAD(+) + 4 H(+)(out). NDH-1 shuttles electrons from NADH, via FMN and iron-sulfur (Fe-S) centers, to quinones in the respiratory chain. The immediate electron acceptor for the enzyme in this species is believed to be ubiquinone. Couples the redox reaction to proton translocation (for every two electrons transferred, four hydrogen ions are translocated across the cytoplasmic membrane), and thus conserves the redox energy in a proton gradient. This Pseudomonas syringae pv. syringae (strain B728a) protein is NADH-quinone oxidoreductase subunit K.